The primary structure comprises 194 residues: RNA polymerase II subunit A C-terminal domain phosphatase SSU72 like protein 1 (194 aa).

Belongs to the SSU72 phosphatase family.

It is found in the nucleus. It carries out the reaction O-phospho-L-seryl-[protein] + H2O = L-seryl-[protein] + phosphate. The catalysed reaction is O-phospho-L-threonyl-[protein] + H2O = L-threonyl-[protein] + phosphate. Its function is as follows. Protein phosphatase that catalyzes the dephosphorylation of the C-terminal domain of RNA polymerase II. Plays a role in RNA processing and termination. The polypeptide is RNA polymerase II subunit A C-terminal domain phosphatase SSU72 like protein 1 (Homo sapiens (Human)).